The chain runs to 330 residues: Beta-ketoacyl-[acyl-carrier-protein] synthase III (330 aa).

Active-site residues include Cys-114 and His-254. An ACP-binding region spans residues 255–259 (QANLR). Residue Asn-284 is part of the active site.

The protein belongs to the thiolase-like superfamily. FabH family. Homodimer.

It localises to the cytoplasm. It carries out the reaction malonyl-[ACP] + acetyl-CoA + H(+) = 3-oxobutanoyl-[ACP] + CO2 + CoA. It participates in lipid metabolism; fatty acid biosynthesis. Its function is as follows. Catalyzes the condensation reaction of fatty acid synthesis by the addition to an acyl acceptor of two carbons from malonyl-ACP. Catalyzes the first condensation reaction which initiates fatty acid synthesis and may therefore play a role in governing the total rate of fatty acid production. Possesses both acetoacetyl-ACP synthase and acetyl transacylase activities. Its substrate specificity determines the biosynthesis of branched-chain and/or straight-chain of fatty acids. The chain is Beta-ketoacyl-[acyl-carrier-protein] synthase III from Roseiflexus castenholzii (strain DSM 13941 / HLO8).